The sequence spans 136 residues: Nanos homolog 2 (136 aa).

The tract at residues lysine 27 to glutamate 51 is disordered. The span at glutamine 28–glutamine 48 shows a compositional bias: basic and acidic residues. The Nanos-type zinc-finger motif lies at isoleucine 60–leucine 114. Zn(2+) contacts are provided by cysteine 61, cysteine 64, histidine 77, cysteine 88, cysteine 96, cysteine 99, histidine 107, and cysteine 112. 2 short sequence motifs (C2HC) span residues cysteine 61 to cysteine 88 and cysteine 96 to cysteine 112.

The protein belongs to the nanos family. In terms of assembly, interacts with CNOT1, CNOT3, CNOT6L, CNOT7 and CNOT9. Predominantly expressed in male germ cells. Expressed in self-renewing spermatogonial stem cells and developing gonads.

It localises to the cytoplasm. It is found in the P-body. Its subcellular location is the perinuclear region. Its function is as follows. Plays a key role in the sexual differentiation of germ cells by promoting the male fate but suppressing the female fate. Represses the female fate pathways by suppressing meiosis, which in turn results in the promotion of the male fate. Maintains the suppression of meiosis by preventing STRA8 expression, which is required for premeiotic DNA replication, after CYP26B1 is decreased. Regulates the localization of the CCR4-NOT deadenylation complex to P-bodies and plays a role in recruiting the complex to trigger the degradation of mRNAs involved in meiosis. Required for the maintenance of the spermatogonial stem cell population. Not essential for the assembly of P-bodies but is required for the maintenance of their normal state. The protein is Nanos homolog 2 (Nanos2) of Mus musculus (Mouse).